The sequence spans 125 residues: Fluoride-specific ion channel FluC (125 aa).

4 helical membrane passes run 3 to 23, 33 to 53, 65 to 85, and 99 to 119; these read FILI…VSKV, IPLG…FVLF, FVLF…TFAY, and LVYF…GMVL. 2 residues coordinate Na(+): G75 and T78.

The protein belongs to the fluoride channel Fluc/FEX (TC 1.A.43) family.

Its subcellular location is the cell inner membrane. It carries out the reaction fluoride(in) = fluoride(out). Na(+) is not transported, but it plays an essential structural role and its presence is essential for fluoride channel function. In terms of biological role, fluoride-specific ion channel. Important for reducing fluoride concentration in the cell, thus reducing its toxicity. In Thermosipho melanesiensis (strain DSM 12029 / CIP 104789 / BI429), this protein is Fluoride-specific ion channel FluC.